We begin with the raw amino-acid sequence, 638 residues long: MAVAHGPVATSSPEQNGAVPSEATKKDQNLTRGNWGNQIEFVLTSVGYAVGLGNVWRFPYLCYRNGGGAFMFPYFIMLVFCGIPLFFMELSFGQFASQGCLGVWRISPMFKGVGYGMMVVSTYIGIYYNVVICIAFYYFFSSMTHVLPWAYCNNPWNTPDCAGVLDASNLTNGSRPTALSGNLSHLFNYTLQRTSPSEEYWRLYVLKLSDDIGDFGEVRLPLLGCLGVSWVVVFLCLIRGVKSSGKVVYFTATFPYVVLTILFVRGVTLEGAFTGIMYYLTPKWDKILEAKVWGDAASQIFYSLGCAWGGLITMASYNKFHNNCYRDSVIISITNCATSVYAGFVIFSILGFMANHLGVDVSRVADHGPGLAFVAYPEALTLLPISPLWSLLFFFMLILLGLGTQFCLLETLVTAIVDEVGNEWILQKKTYVTLGVAVAGFLLGIPLTSQAGIYWLLLMDNYAASFSLVVISCIMCVSIMYIYGHRNYFQDIQMMLGFPPPLFFQICWRFVSPTIIFFILIFTVIQYRPITYNHYQYPGWAVAIGFLMALSSVICIPLYALFQLCRTDGDTLLQRLKNATKPSRDWGPALLEHRTGRYAPTTTPSPEDGFEVQPLHPDKAQIPIVGSNGSSRLQDSRI.

The tract at residues 1 to 30 (MAVAHGPVATSSPEQNGAVPSEATKKDQNL) is disordered. Topologically, residues 1-40 (MAVAHGPVATSSPEQNGAVPSEATKKDQNLTRGNWGNQIE) are cytoplasmic. A run of 3 helical transmembrane segments spans residues 41–61 (FVLTSVGYAVGLGNVWRFPYL), 68–88 (GAFMFPYFIMLVFCGIPLFFM), and 120–140 (VSTYIGIYYNVVICIAFYYFF). At 141–217 (SSMTHVLPWA…LSDDIGDFGE (77 aa)) the chain is on the extracellular side. N-linked (GlcNAc...) asparagine glycosylation is found at Asn-169, Asn-172, Asn-182, and Asn-188. Helical transmembrane passes span 218–238 (VRLPLLGCLGVSWVVVFLCLI), 247–267 (VVYFTATFPYVVLTILFVRGV), 292–312 (VWGDAASQIFYSLGCAWGGLI), 339–359 (SVYAGFVIFSILGFMANHLGV), 382–402 (LLPISPLWSLLFFFMLILLGL), 438–458 (VAGFLLGIPLTSQAGIYWLLL), 462–482 (YAASFSLVVISCIMCVSIMYI), 502–522 (LFFQICWRFVSPTIIFFILIF), and 542–562 (VAIGFLMALSSVICIPLYALF). Over 563-638 (QLCRTDGDTL…GSSRLQDSRI (76 aa)) the chain is Cytoplasmic. Thr-603 bears the Phosphothreonine mark. 2 positions are modified to phosphoserine: Ser-605 and Ser-630. An essential for interaction with EXOC1 region spans residues 627–638 (SNGSSRLQDSRI).

This sequence belongs to the sodium:neurotransmitter symporter (SNF) (TC 2.A.22) family. SLC6A9 subfamily. In terms of assembly, interacts with EXOC1; interaction increases the transporter capacity of SLC6A9 probably by promoting its insertion into the cell membrane. Interacts with EXOC3 and EXOC4. Found only in the white matter of the CNS. In terms of tissue distribution, found in the gray matter of CNS as well as in macrophages and mast cells in peripheral tissues.

The protein resides in the cell membrane. It carries out the reaction glycine(out) + chloride(out) + 2 Na(+)(out) = glycine(in) + chloride(in) + 2 Na(+)(in). Inhibited by sarcosine. In terms of biological role, sodium- and chloride-dependent glycine transporter. Essential for regulating glycine concentrations at inhibitory glycinergic synapses. This Rattus norvegicus (Rat) protein is Sodium- and chloride-dependent glycine transporter 1 (Slc6a9).